The following is a 264-amino-acid chain: Triosephosphate isomerase (264 aa).

13–15 (NWK) lines the substrate pocket. Catalysis depends on His-98, which acts as the Electrophile. Catalysis depends on Glu-170, which acts as the Proton acceptor. Substrate-binding positions include Gly-176, Ser-216, and 237-238 (GG).

The protein belongs to the triosephosphate isomerase family. In terms of assembly, homodimer.

Its subcellular location is the cytoplasm. The enzyme catalyses D-glyceraldehyde 3-phosphate = dihydroxyacetone phosphate. It functions in the pathway carbohydrate biosynthesis; gluconeogenesis. It participates in carbohydrate degradation; glycolysis; D-glyceraldehyde 3-phosphate from glycerone phosphate: step 1/1. Functionally, involved in the gluconeogenesis. Catalyzes stereospecifically the conversion of dihydroxyacetone phosphate (DHAP) to D-glyceraldehyde-3-phosphate (G3P). In Protochlamydia amoebophila (strain UWE25), this protein is Triosephosphate isomerase.